The sequence spans 594 residues: Grainyhead-like protein 3 homolog (594 aa).

2 transcription activation regions span residues 25–75 (NDDE…RIIT) and 28–91 (EAWS…SCIE). The 234-residue stretch at 220 to 453 (ANRDFECTLE…DMETHPVLFI (234 aa)) folds into the Grh/CP2 DB domain. Positions 483–503 (SSQSFPESFEAPPSKQQTNED) are disordered.

The protein belongs to the grh/CP2 family. Grainyhead subfamily.

The protein resides in the nucleus. Functionally, transcription factor playing important roles in primary neurulation and in the differentiation of stratified epithelia of both ectodermal and endodermal origin. Binds directly to the consensus DNA sequence 5'-AACCGGTT-3' acting as an activator and repressor on distinct target genes. The polypeptide is Grainyhead-like protein 3 homolog (grhl3) (Xenopus tropicalis (Western clawed frog)).